The primary structure comprises 141 residues: Hemoglobin subunit alpha-1 (141 aa).

Residues 1–141 (VLSEGNKKAI…VTYQLSSLYR (141 aa)) form the Globin domain. Histidine 59 contributes to the O2 binding site. Histidine 88 is a binding site for heme b.

The protein belongs to the globin family. In terms of assembly, heterotetramer of two alpha chains and two beta chains. As to expression, red blood cells.

Involved in oxygen transport from the lung to the various peripheral tissues. The protein is Hemoglobin subunit alpha-1 of Torpedo marmorata (Marbled electric ray).